Consider the following 157-residue polypeptide: Peptide methionine sulfoxide reductase MsrA (157 aa).

Cysteine 10 is an active-site residue.

This sequence belongs to the MsrA Met sulfoxide reductase family.

The enzyme catalyses L-methionyl-[protein] + [thioredoxin]-disulfide + H2O = L-methionyl-(S)-S-oxide-[protein] + [thioredoxin]-dithiol. It carries out the reaction [thioredoxin]-disulfide + L-methionine + H2O = L-methionine (S)-S-oxide + [thioredoxin]-dithiol. In terms of biological role, has an important function as a repair enzyme for proteins that have been inactivated by oxidation. Catalyzes the reversible oxidation-reduction of methionine sulfoxide in proteins to methionine. This Clostridium botulinum (strain Okra / Type B1) protein is Peptide methionine sulfoxide reductase MsrA.